A 58-amino-acid polypeptide reads, in one-letter code: Mitochondrial import receptor subunit TOM7 homolog (58 aa).

Over 1–16 the chain is Cytoplasmic; it reads MKLSPATKSFIGKTVD. Residues 17–35 traverse the membrane as a helical segment; the sequence is ISTFAIQWGFVPFVVYLGF. Over 36–58 the chain is Mitochondrial intermembrane; that stretch reads KKGAEPMPNGQILPLSAMSLLWG.

It belongs to the Tom7 family. Forms part of the preprotein translocase complex of the outer mitochondrial membrane (TOM complex).

It is found in the mitochondrion outer membrane. This is Mitochondrial import receptor subunit TOM7 homolog (tomm-7) from Caenorhabditis elegans.